The chain runs to 456 residues: Glutathione reductase (456 aa).

Residues serine 14, glycine 15, glutamate 34, threonine 41, cysteine 42, and lysine 50 each contribute to the FAD site. Position 14 (serine 14) interacts with glutathione. Cysteine 42 and cysteine 47 form a disulfide bridge. Residue tyrosine 99 participates in glutathione binding. Position 115 (glycine 115) interacts with FAD. Residues alanine 180, isoleucine 183, glutamate 186, arginine 203, arginine 209, and glycine 267 each contribute to the NADP(+) site. FAD is bound at residue aspartate 308. Position 315 (glutamate 315) interacts with NADP(+). Threonine 317 is an FAD binding site. Arginine 325 is a binding site for glutathione. NADP(+) is bound at residue valine 348. Histidine 445 serves as a coordination point for FAD. Catalysis depends on histidine 445, which acts as the Proton acceptor.

This sequence belongs to the class-I pyridine nucleotide-disulfide oxidoreductase family. As to quaternary structure, homodimer. It depends on FAD as a cofactor.

The protein resides in the cytoplasm. It catalyses the reaction 2 glutathione + NADP(+) = glutathione disulfide + NADPH + H(+). Catalyzes the reduction of glutathione disulfide (GSSG) to reduced glutathione (GSH). Constitutes the major mechanism to maintain a high GSH:GSSG ratio in the cytosol. This Haemophilus influenzae (strain ATCC 51907 / DSM 11121 / KW20 / Rd) protein is Glutathione reductase (gor).